We begin with the raw amino-acid sequence, 590 residues long: Aspartate--tRNA(Asp/Asn) ligase (590 aa).

E175 is a binding site for L-aspartate. An aspartate region spans residues 199–202; sequence QQYK. 2 residues coordinate L-aspartate: R221 and H450. 221–223 is an ATP binding site; it reads RDE. An ATP-binding site is contributed by E484. An L-aspartate-binding site is contributed by R491. 536-539 is a binding site for ATP; it reads GIDR.

It belongs to the class-II aminoacyl-tRNA synthetase family. Type 1 subfamily. Homodimer.

It localises to the cytoplasm. The enzyme catalyses tRNA(Asx) + L-aspartate + ATP = L-aspartyl-tRNA(Asx) + AMP + diphosphate. Its function is as follows. Aspartyl-tRNA synthetase with relaxed tRNA specificity since it is able to aspartylate not only its cognate tRNA(Asp) but also tRNA(Asn). Reaction proceeds in two steps: L-aspartate is first activated by ATP to form Asp-AMP and then transferred to the acceptor end of tRNA(Asp/Asn). The protein is Aspartate--tRNA(Asp/Asn) ligase of Azorhizobium caulinodans (strain ATCC 43989 / DSM 5975 / JCM 20966 / LMG 6465 / NBRC 14845 / NCIMB 13405 / ORS 571).